The primary structure comprises 171 residues: 6,7-dimethyl-8-ribityllumazine synthase (171 aa).

5-amino-6-(D-ribitylamino)uracil contacts are provided by residues F24, 58–60, and 82–84; these read ALE and AVI. 87-88 is a (2S)-2-hydroxy-3-oxobutyl phosphate binding site; it reads ET. H90 (proton donor) is an active-site residue. N115 serves as a coordination point for 5-amino-6-(D-ribitylamino)uracil. (2S)-2-hydroxy-3-oxobutyl phosphate is bound at residue R129. The tract at residues 150-171 is disordered; the sequence is ALDQLGDDEDEEEDEEDEEERA. Residues 154–171 show a composition bias toward acidic residues; that stretch reads LGDDEDEEEDEEDEEERA.

Belongs to the DMRL synthase family.

It catalyses the reaction (2S)-2-hydroxy-3-oxobutyl phosphate + 5-amino-6-(D-ribitylamino)uracil = 6,7-dimethyl-8-(1-D-ribityl)lumazine + phosphate + 2 H2O + H(+). Its pathway is cofactor biosynthesis; riboflavin biosynthesis; riboflavin from 2-hydroxy-3-oxobutyl phosphate and 5-amino-6-(D-ribitylamino)uracil: step 1/2. Its function is as follows. Catalyzes the formation of 6,7-dimethyl-8-ribityllumazine by condensation of 5-amino-6-(D-ribitylamino)uracil with 3,4-dihydroxy-2-butanone 4-phosphate. This is the penultimate step in the biosynthesis of riboflavin. The chain is 6,7-dimethyl-8-ribityllumazine synthase from Burkholderia ambifaria (strain ATCC BAA-244 / DSM 16087 / CCUG 44356 / LMG 19182 / AMMD) (Burkholderia cepacia (strain AMMD)).